A 282-amino-acid chain; its full sequence is Deoxyribonuclease-1 (282 aa).

The signal sequence occupies residues 1–22; sequence MRGTRLMGLLLALAGLLQLGLS. N-linked (GlcNAc...) asparagine glycosylation occurs at N40. E100 is an active-site residue. C123 and C126 are disulfide-bonded. H156 is an active-site residue. C195 and C231 form a disulfide bridge.

The protein belongs to the DNase I family. Ca(2+) is required as a cofactor. Mg(2+) serves as cofactor. The only differences between the A and B forms and the C and D forms are in the compositions of the carbohydrate bound to Asn-40.

The protein localises to the secreted. It localises to the zymogen granule. It is found in the nucleus envelope. The catalysed reaction is Endonucleolytic cleavage to 5'-phosphodinucleotide and 5'-phosphooligonucleotide end-products.. Functionally, serum endocuclease secreted into body fluids by a wide variety of exocrine and endocrine organs. Expressed by non-hematopoietic tissues and preferentially cleaves protein-free DNA. Among other functions, seems to be involved in cell death by apoptosis. Binds specifically to G-actin and blocks actin polymerization. Together with DNASE1L3, plays a key role in degrading neutrophil extracellular traps (NETs). NETs are mainly composed of DNA fibers and are released by neutrophils to bind pathogens during inflammation. Degradation of intravascular NETs by DNASE1 and DNASE1L3 is required to prevent formation of clots that obstruct blood vessels and cause organ damage following inflammation. The sequence is that of Deoxyribonuclease-1 (DNASE1) from Bos taurus (Bovine).